The following is a 526-amino-acid chain: GMP synthase [glutamine-hydrolyzing] (526 aa).

Positions 3-199 (RVAIIDFGSQ…FVRIAGCDNN (197 aa)) constitute a Glutamine amidotransferase type-1 domain. Residue Cys83 is the Nucleophile of the active site. Active-site residues include His174 and Glu176. The 193-residue stretch at 200–392 (WTVESFLDEQ…LGISDEILMR (193 aa)) folds into the GMPS ATP-PPase domain. 227–233 (SGGVDSS) lines the ATP pocket.

As to quaternary structure, homodimer.

The catalysed reaction is XMP + L-glutamine + ATP + H2O = GMP + L-glutamate + AMP + diphosphate + 2 H(+). The protein operates within purine metabolism; GMP biosynthesis; GMP from XMP (L-Gln route): step 1/1. In terms of biological role, catalyzes the synthesis of GMP from XMP. The sequence is that of GMP synthase [glutamine-hydrolyzing] from Ehrlichia chaffeensis (strain ATCC CRL-10679 / Arkansas).